A 551-amino-acid chain; its full sequence is Chaperonin GroEL (551 aa).

Residues 30-33, Lys51, 87-91, Gly415, 481-483, and Asp497 contribute to the ATP site; these read TLGP, DGTTT, and NAA.

This sequence belongs to the chaperonin (HSP60) family. As to quaternary structure, forms a cylinder of 14 subunits composed of two heptameric rings stacked back-to-back. Interacts with the co-chaperonin GroES.

The protein localises to the cytoplasm. The enzyme catalyses ATP + H2O + a folded polypeptide = ADP + phosphate + an unfolded polypeptide.. Functionally, together with its co-chaperonin GroES, plays an essential role in assisting protein folding. The GroEL-GroES system forms a nano-cage that allows encapsulation of the non-native substrate proteins and provides a physical environment optimized to promote and accelerate protein folding. This Magnetococcus marinus (strain ATCC BAA-1437 / JCM 17883 / MC-1) protein is Chaperonin GroEL.